Here is a 273-residue protein sequence, read N- to C-terminus: MHIIELIKALILGLVEGATEFAPVSSTGHMIIVDDMWLKSSEFLGKYGANTFKVVIQLGSVLAAVVVFKDKFFELLYLRKGEVRKGPRLTLMHIFVGLLPAGVLGVLFEDYIDEHLFSTKTVLIGLVLGALLMIAADRFGKRTVAQTVDDITYKQAFIVGLVQCLSLWPGFSRSGSTISGGVLVGMSHRAAADFTFIMAVPIMAGASAISLLKNWQYITFDALPFFVVGFISAFVFALLAIRFFLRLINRVRLVPFAIYRIVLAAVIYVVYFA.

Helical transmembrane passes span 3 to 23 (IIEL…EFAP), 48 to 68 (GANT…VVVF), 89 to 109 (LTLM…VLFE), 116 to 136 (LFST…MIAA), 151 to 171 (ITYK…WPGF), 192 to 212 (ADFT…ISLL), 225 to 245 (FFVV…RFFL), and 253 to 273 (LVPF…VYFA).

This sequence belongs to the UppP family.

It localises to the cell membrane. The catalysed reaction is di-trans,octa-cis-undecaprenyl diphosphate + H2O = di-trans,octa-cis-undecaprenyl phosphate + phosphate + H(+). In terms of biological role, catalyzes the dephosphorylation of undecaprenyl diphosphate (UPP). Confers resistance to bacitracin. The protein is Undecaprenyl-diphosphatase of Anoxybacillus flavithermus (strain DSM 21510 / WK1).